Reading from the N-terminus, the 312-residue chain is uncharacterized protein (312 aa).

2 helical membrane-spanning segments follow: residues 4 to 24 and 286 to 306; these read AIYL…TYAE and YLLS…AIYL.

The protein localises to the cell membrane. This is an uncharacterized protein from Methanocaldococcus jannaschii (strain ATCC 43067 / DSM 2661 / JAL-1 / JCM 10045 / NBRC 100440) (Methanococcus jannaschii).